The sequence spans 213 residues: Receptor-binding cancer antigen expressed on SiSo cells (213 aa).

The Extracellular segment spans residues 1–6 (MAITQF). Residues 7 to 27 (RLFKVCTCLATVLSFLKRLIC) form a helical; Signal-anchor for type III membrane protein membrane-spanning segment. Over 28-213 (RSGRGRKLSG…EQNKMGVKLS (186 aa)) the chain is Cytoplasmic. Phosphoserine is present on serine 36. Phosphothreonine is present on threonine 41. Tyrosine 94 carries the phosphotyrosine modification. Residues 168–209 (QAEEVLRQQKIADREKRAAEQQRKKMEKEAQRLLKKEQNKMG) are a coiled coil. Positions 179-206 (ADREKRAAEQQRKKMEKEAQRLLKKEQN) are enriched in basic and acidic residues. The interval 179–213 (ADREKRAAEQQRKKMEKEAQRLLKKEQNKMGVKLS) is disordered.

As to quaternary structure, homodimer.

The protein localises to the golgi apparatus membrane. May participate in suppression of cell proliferation and induces apoptotic cell death through activation of interleukin-1-beta converting enzyme (ICE)-like proteases. The polypeptide is Receptor-binding cancer antigen expressed on SiSo cells (Ebag9) (Rattus norvegicus (Rat)).